The primary structure comprises 457 residues: Transcription factor PCF7 (457 aa).

Residues 58–84 adopt a coiled-coil conformation; that stretch reads STLHYLLQEKERAQQAHEQLQIYQQQQ. Positions 95-119 are disordered; it reads RQPASRGPGGGGGGGDGGGSSGEST. Gly residues predominate over residues 101-115; sequence GPGGGGGGGDGGGSS. Positions 140–198 constitute a TCP domain; sequence RKDRHSKVCTARGLRDRRVRLAAHTAIRFYDVQDRLGYDRPSKAVDWLMRNAKAAIDEL. Disordered regions lie at residues 199–231 and 263–299; these read PDRAEAPPPPAAASTEQPEATEQATSTSYGFGN and KSLFPSSSTASGAASAGHDEYRGSPPDLLSRTTSNQQ. 2 stretches are compositionally biased toward low complexity: residues 210 to 225 and 268 to 278; these read AASTEQPEATEQATST and SSSTASGAASA.

Forms homodimers and heterodimers.

It is found in the nucleus. In terms of biological role, transcription activator. Binds the promoter core sequence 5'-GGNCC-3'. This chain is Transcription factor PCF7 (PCF7), found in Oryza sativa subsp. japonica (Rice).